Consider the following 888-residue polypeptide: Isoleucine--tRNA ligase (888 aa).

A 'HIGH' region motif is present at residues 61-71 (PYANGSIHIGH). Position 551 (glutamate 551) interacts with L-isoleucyl-5'-AMP. Positions 592–596 (KMSKQ) match the 'KMSKS' region motif. Position 595 (lysine 595) interacts with ATP. 4 residues coordinate Zn(2+): cysteine 862, cysteine 865, cysteine 879, and cysteine 882.

Belongs to the class-I aminoacyl-tRNA synthetase family. IleS type 1 subfamily. As to quaternary structure, monomer. The cofactor is Zn(2+).

Its subcellular location is the cytoplasm. The catalysed reaction is tRNA(Ile) + L-isoleucine + ATP = L-isoleucyl-tRNA(Ile) + AMP + diphosphate. In terms of biological role, catalyzes the attachment of isoleucine to tRNA(Ile). As IleRS can inadvertently accommodate and process structurally similar amino acids such as valine, to avoid such errors it has two additional distinct tRNA(Ile)-dependent editing activities. One activity is designated as 'pretransfer' editing and involves the hydrolysis of activated Val-AMP. The other activity is designated 'posttransfer' editing and involves deacylation of mischarged Val-tRNA(Ile). This chain is Isoleucine--tRNA ligase, found in Mycoplasmopsis pulmonis (strain UAB CTIP) (Mycoplasma pulmonis).